Consider the following 63-residue polypeptide: 2-hydroxymuconate tautomerase (63 aa).

Pro2 serves as the catalytic Proton acceptor; via imino nitrogen.

It belongs to the 4-oxalocrotonate tautomerase family. Homohexamer.

The catalysed reaction is (2Z,4E)-2-hydroxyhexa-2,4-dienedioate = (3E)-2-oxohex-3-enedioate. The protein operates within xenobiotic degradation; toluene degradation. Its pathway is xenobiotic degradation; xylene degradation. Functionally, catalyzes the ketonization of 2-hydroxymuconate stereoselectively to yield 2-oxo-3-hexenedioate. The protein is 2-hydroxymuconate tautomerase (xylH) of Pseudomonas putida (Arthrobacter siderocapsulatus).